The chain runs to 160 residues: Monooxygenase AacuO (160 aa).

It belongs to the avfA family.

It participates in secondary metabolite biosynthesis. Functionally, monooxygenase; part of the gene cluster that mediates the biosynthesis of the tetrahydroxanthone dimer secalonic acid D. The pathway begins with the synthesis of atrochrysone thioester by the polyketide synthase AacuL. The atrochrysone carboxyl ACP thioesterase AacuM then breaks the thioester bond and releases the atrochrysone carboxylic acid from AacuL. Atrochrysone carboxylic acid is decarboxylated by the decarboxylase AacuI, and oxidized by the anthrone oxygenase AacuG to yield emodin. Emodin is then reduced to emodin hydroquinone by a yet unidentified oxidoreductase. A-ring reduction by the short chain dehydrogenase AacuN, dehydration by the scytalone dehydratase-like protein AacuK and probable spontaneous re-oxidation, results in overall deoxygenation to chrysophanol. Baeyer-Villiger oxidation by the Baeyer-Villiger monooxygenase (BVMO) AacuH then yields monodictyphenone. Monodictyphenone is transformed into compounds with the tetrahydroxanthone skeleton via methylesterification by the methyltransferase AacuQ, followed by the action of the flavin-dependent monooxygenase AacuC, the isomerase AacuP, and the short chain dehydrogenase/reductase AacuF or AacuD. AacuF and AacuD should accept the same compound as a substrate but perform the ketoreduction with a different stereoselectivity, thus yielding blennolides B and A, respectively. In the final step of the biosynthesis, the cytochrome P450 monooxygenase AacuE accepts blennolide B and/or blennolide A to conduct the dimerization reaction to furnish the tetrahydroxanthone dimers, secalonic acids D, B, and F. This Aspergillus aculeatus (strain ATCC 16872 / CBS 172.66 / WB 5094) protein is Monooxygenase AacuO.